We begin with the raw amino-acid sequence, 264 residues long: Thymidylate synthase (264 aa).

A dUMP-binding site is contributed by R21. H51 serves as a coordination point for (6R)-5,10-methylene-5,6,7,8-tetrahydrofolate. 126–127 (RR) is a binding site for dUMP. The Nucleophile role is filled by C146. DUMP contacts are provided by residues 166–169 (RSAD), N177, and 207–209 (HLY). D169 provides a ligand contact to (6R)-5,10-methylene-5,6,7,8-tetrahydrofolate. Position 263 (S263) interacts with (6R)-5,10-methylene-5,6,7,8-tetrahydrofolate.

It belongs to the thymidylate synthase family. Bacterial-type ThyA subfamily. Homodimer.

It is found in the cytoplasm. The enzyme catalyses dUMP + (6R)-5,10-methylene-5,6,7,8-tetrahydrofolate = 7,8-dihydrofolate + dTMP. It participates in pyrimidine metabolism; dTTP biosynthesis. Functionally, catalyzes the reductive methylation of 2'-deoxyuridine-5'-monophosphate (dUMP) to 2'-deoxythymidine-5'-monophosphate (dTMP) while utilizing 5,10-methylenetetrahydrofolate (mTHF) as the methyl donor and reductant in the reaction, yielding dihydrofolate (DHF) as a by-product. This enzymatic reaction provides an intracellular de novo source of dTMP, an essential precursor for DNA biosynthesis. This chain is Thymidylate synthase, found in Nitrosococcus oceani (strain ATCC 19707 / BCRC 17464 / JCM 30415 / NCIMB 11848 / C-107).